Here is a 1580-residue protein sequence, read N- to C-terminus: Adhesion G protein-coupled receptor L3 (1580 aa).

The first 19 residues, 1-19, serve as a signal peptide directing secretion; that stretch reads MWPSQLLVFMMLLAPIIHG. The Extracellular segment spans residues 20–949; that stretch reads GKHSERHPAL…VHDLLLDVIT (930 aa). The tract at residues 23–81 is disordered; it reads SERHPALASPLRHAERGPGGALPPRHLLQQPAAERATAHRGPGPRGATRGVRGPGAHGA. Residues 103–192 form the SUEL-type lectin domain; it reads SCESYPIELR…KYLEVQYECV (90 aa). 5 disulfides stabilise this stretch: Cys-104–Cys-134, Cys-113–Cys-191, Cys-146–Cys-178, Cys-159–Cys-165, and Cys-203–Cys-385. A glycan (N-linked (GlcNAc...) asparagine) is linked at Asn-161. An Olfactomedin-like domain is found at 202 to 461; that stretch reads LCPGLLKGVY…VVKYSLDFGP (260 aa). Residues 317 to 347 form an interaction with FLRT3 region; that stretch reads YHDTSPYRWGGKSDIDLAVDENGLWVIYATE. The Ca(2+) site is built by Asp-332, Asn-380, Ala-381, and Val-435. The interval 494-540 is disordered; sequence EISTTGPLGTGSTTTSTTLRTTTWSPGRSTTPSVSGRRNRSTSTPSP. The span at 496–521 shows a compositional bias: low complexity; it reads STTGPLGTGSTTTSTTLRTTTWSPGR. Polar residues predominate over residues 522-539; it reads STTPSVSGRRNRSTSTPS. 6 N-linked (GlcNAc...) asparagine glycosylation sites follow: Asn-532, Asn-617, Asn-827, Asn-840, Asn-885, and Asn-911. Residues 756-935 enclose the GAIN-B domain; sequence DIVRENTDNI…AVLMAHVEVK (180 aa). 2 cysteine pairs are disulfide-bonded: Cys-886-Cys-917 and Cys-905-Cys-919. The tract at residues 886–935 is GPS; the sequence is CSFWSYSKRTMTGYWSTQGCRLLTTNKTHTTCSCNHLTNFAVLMAHVEVK. The stachel stretch occupies residues 923 to 939; it reads TNFAVLMAHVEVKHSDA. A helical transmembrane segment spans residues 950-970; that stretch reads WVGILLSLVCLLICIFTFCFF. Topologically, residues 971 to 978 are cytoplasmic; that stretch reads RGLQSDRN. Residues 979–999 form a helical membrane-spanning segment; sequence TIHKNLCISLFVAELLFLIGI. Asn-1000 carries an N-linked (GlcNAc...) asparagine glycan. Over 1000–1007 the chain is Extracellular; sequence NRTDQPIA. The chain crosses the membrane as a helical span at residues 1008–1028; the sequence is CAVFAALLHFFFLAAFTWMFL. The Cytoplasmic portion of the chain corresponds to 1029 to 1050; that stretch reads EGVQLYIMLVEVFESEHSRRKY. A helical membrane pass occupies residues 1051 to 1071; sequence FYLVGYGMPALIVAVSAAVDY. At 1072 to 1088 the chain is on the extracellular side; it reads RSYGTDKVCWLRLDTYF. Residues 1089-1109 form a helical membrane-spanning segment; sequence IWSFIGPATLIIMLNVIFLGI. Topologically, residues 1110-1142 are cytoplasmic; that stretch reads ALYKMFHHTAILKPESGCLDNINYEDNRPFIKS. A helical membrane pass occupies residues 1143-1163; that stretch reads WVIGAIALLCLLGLTWAFGLM. The Extracellular portion of the chain corresponds to 1164–1169; sequence YINEST. N-linked (GlcNAc...) asparagine glycosylation is present at Asn-1166. Residues 1170-1190 traverse the membrane as a helical segment; sequence VIMAYLFTIFNSLQGMFIFIF. Topologically, residues 1191–1580 are cytoplasmic; sequence HCVLQKKVRK…KGPAHLVTSL (390 aa). The disordered stretch occupies residues 1213 to 1238; that stretch reads GRSTESSIGSGKTSGSRTPGRYSTGS. At Ser-1254 the chain carries Phosphoserine. Positions 1555–1580 are disordered; sequence FIVPPNKDGTPPEGSSKGPAHLVTSL. Positions 1575–1580 match the PDZ-binding motif; that stretch reads HLVTSL.

Belongs to the G-protein coupled receptor 2 family. LN-TM7 subfamily. As to quaternary structure, heterodimer of 2 chains generated by proteolytic processing; the large extracellular N-terminal fragment and the membrane-bound C-terminal fragment predominantly remain associated and non-covalently linked. Interacts (via olfactomedin-like domain) with FLRT1 (via extracellular domain). Interacts (via olfactomedin-like domain) with FLRT2 (via extracellular domain). Interacts (via olfactomedin-like domain) with FLRT3 (via extracellular domain); the interaction is direct. Interacts (via extracellular domain) with TENM1. Interacts (via extracellular domain) with TENM2. Interacts (via extracellular domain) with TENM3. Identified in a complex with FLRT3 and UNC5B; does not interact with UNC5B by itself. Identified in a complex with FLRT3 and UNC5D; does not interact with UNC5D by itself. In terms of assembly, interacts (via PDZ-binding motif) with SHANK3. Interacts (via PDZ-binding motif) with DLG4. In terms of processing, autoproteolytically processed at the GPS region of the GAIN-B domain; this cleavage modulates receptor activity. In terms of tissue distribution, brain-specific distribution but low levels are also detected in lung and spleen.

The protein resides in the cell membrane. The protein localises to the postsynaptic cell membrane. Its subcellular location is the cell projection. It is found in the axon. It localises to the cell junction. With respect to regulation, forms a heterodimer of 2 chains generated by proteolytic processing that remain associated through non-covalent interactions mediated by the GAIN-B domain. In the inactivated receptor, the Stachel sequence (also named stalk) is embedded in the GAIN-B domain, where it adopts a beta-strand conformation. On activation, the Stachel moves into the 7 transmembrane region and adopts a twisted hook-shaped configuration that forms contacts within the receptor, leading to coupling of a G-alpha protein, which activates signaling. The cleaved GAIN-B and N-terminal domains can then dissociate from the rest of the receptor. Functionally, orphan adhesion G-protein coupled receptor (aGPCR), which mediates synapse specificity. Ligand binding causes a conformation change that triggers signaling via guanine nucleotide-binding proteins (G proteins) and modulates the activity of downstream effectors. ADGRL3 is coupled with different classes of G alpha proteins, such as G(12)/G(13), G(s), G(i) or G(q), depending on the context. Coupling to G(12)/G(13) G proteins, which mediates the activation Rho small GTPases is the most efficient. Following G-protein coupled receptor activation, associates with cell adhesion molecules that are expressed at the surface of adjacent cells to direct synapse specificity. Specifically mediates the establishment of Schaffer-collateral synapses formed by CA3-region axons on CA1-region pyramidal neurons in the hippocampus. Localizes to postsynaptic spines in excitatory synapses in the S.oriens and S.radiatum and interacts with presynaptic cell adhesion molecules FLRT3 and TENM2, promoting synapse formation. Plays a role in the development of glutamatergic synapses in the cortex. Important in determining the connectivity rates between the principal neurons in the cortex. Orphan adhesion G-protein coupled receptor (aGPCR), which mediates synapse specificity. Ligand binding causes a conformation change that triggers signaling via guanine nucleotide-binding proteins (G proteins) and modulates the activity of downstream effectors, such as adenylate cyclase. Isoform 1 is specifically coupled to G(s) G proteins and mediates activation of adenylate cyclase activity. Following G-protein coupled receptor activation, undergoes liquid-liquid phase transition, associates with (1) cell adhesion molecules that are expressed at the surface of adjacent cells, as well as (2) PDZ-containing proteins, such as SHANK3 and DLG4, in the cytoplasm to direct synapse formation. This Bos taurus (Bovine) protein is Adhesion G protein-coupled receptor L3.